The chain runs to 751 residues: CCR4-NOT transcription complex subunit 3 (751 aa).

A disordered region spans residues 240 to 534; it reads ATSPPSHSHM…QFSTTPEIKA (295 aa). Residues 257–268 are compositionally biased toward low complexity; it reads SSSTPTSTTSSS. Positions 284–293 are enriched in basic and acidic residues; sequence DDKKRGRSTD. Thr-292 carries the phosphothreonine modification. Residues 294–315 show a composition bias toward polar residues; the sequence is SEVSQSPAKNGSKPVHSNQHPQ. The residue at position 299 (Ser-299) is a Phosphoserine. Residues 317 to 330 are compositionally biased toward pro residues; that stretch reads PAVPPTYPSGPPPT. Residues 339-348 show a composition bias toward polar residues; that stretch reads GNNGASTPAA. Low complexity predominate over residues 441–450; that stretch reads SSSGGSSASS. The segment covering 463 to 472 has biased composition (polar residues); that stretch reads APSTSKESST. The span at 473–498 shows a compositional bias: low complexity; the sequence is AAPSGAGNVASGSGNNSGGPSLLVPL. At Ser-540 the chain carries Phosphoserine. Residues 659-751 form a repressor domain region; that stretch reads EFYQRLSTET…YRYLEDRDLQ (93 aa).

Belongs to the CNOT2/3/5 family. As to quaternary structure, component of the CCR4-NOT complex; distinct complexes seem to exist that differ in the participation of probably mutually exclusive catalytic subunits. In the complex interacts directly with CNOT2. Interacts with TIP120B and NANOS2. Interacts with EBF1. Interacts in an RNA-independent manner with BICC1 (via KH domains).

It is found in the nucleus. Its subcellular location is the cytoplasm. It localises to the P-body. In terms of biological role, component of the CCR4-NOT complex which is one of the major cellular mRNA deadenylases and is linked to various cellular processes including bulk mRNA degradation, miRNA-mediated repression, translational repression during translational initiation and general transcription regulation. Additional complex functions may be a consequence of its influence on mRNA expression. May be involved in metabolic regulation; may be involved in recruitment of the CCR4-NOT complex to deadenylation target mRNAs involved in energy metabolism. Involved in mitotic progression and regulation of the spindle assembly checkpoint by regulating the stability of MAD1L1 mRNA. Can repress transcription and may link the CCR4-NOT complex to transcriptional regulation; the repressive function may involve histone deacetylases. Involved in the maintenance of embryonic stem (ES) cell identity; prevents their differentiation towards extraembryonic trophectoderm lineages. In Mus musculus (Mouse), this protein is CCR4-NOT transcription complex subunit 3 (Cnot3).